Reading from the N-terminus, the 589-residue chain is Guanylate-binding protein 2 (589 aa).

A GTPase domain (Globular) region spans residues 1–309 (MASEIHMLQP…GAISSGSLPC (309 aa)). The 242-residue stretch at 35–276 (NQPVVVVAIV…FTSYIFSYSA (242 aa)) folds into the GB1/RHD3-type G domain. GTP contacts are provided by residues 45 to 52 (GLYRTGKS), 181 to 182 (RD), and L245. At C586 the chain carries Cysteine methyl ester. C586 carries S-geranylgeranyl cysteine lipidation. Positions 587–589 (TIL) are cleaved as a propeptide — removed in mature form.

This sequence belongs to the TRAFAC class dynamin-like GTPase superfamily. GB1/RHD3 GTPase family. GB1 subfamily. In terms of assembly, homodimer; homodimerization occurs upon GTP-binding and is required for the association with membranous structures. Heterodimer with other family members, including GBP1, GBP3, GBP4 and GBP5. In terms of processing, isoprenylation is required for proper subcellular location. As to expression, widely expressed.

The protein resides in the cytoplasmic vesicle membrane. Its subcellular location is the golgi apparatus membrane. The protein localises to the cytoplasm. It localises to the perinuclear region. The enzyme catalyses GTP + H2O = GDP + phosphate + H(+). Its function is as follows. Interferon (IFN)-inducible GTPase that plays important roles in innate immunity against a diverse range of bacterial, viral and protozoan pathogens. Hydrolyzes GTP to GMP in 2 consecutive cleavage reactions, but the major reaction product is GDP. Following infection, recruited to the pathogen-containing vacuoles or vacuole-escaped bacteria and acts as a positive regulator of inflammasome assembly by promoting the release of inflammasome ligands from bacteria. Acts by promoting lysis of pathogen-containing vacuoles, releasing pathogens into the cytosol. Following pathogen release in the cytosol, promotes recruitment of proteins that mediate bacterial cytolysis: this liberates ligands that are detected by inflammasomes, such as lipopolysaccharide (LPS) that activates the non-canonical CASP4/CASP11 inflammasome or double-stranded DNA (dsDNA) that activates the AIM2 inflammasome. Confers protection to the protozoan pathogen Toxoplasma gondii. Independently of its GTPase activity, acts as an inhibitor of various viruses infectivity by inhibiting FURIN-mediated maturation of viral envelope proteins. The polypeptide is Guanylate-binding protein 2 (Gbp2) (Rattus norvegicus (Rat)).